A 746-amino-acid chain; its full sequence is Histone-lysine N-methyltransferase EZH2 (746 aa).

The interval 1-340 (MGQTGKKSEK…AKEFAAALTA (340 aa)) is interaction with DNMT1, DNMT3A and DNMT3B. At S21 the chain carries Phosphoserine; by PKB/AKT1. An interaction with EED region spans residues 39–68 (KSMFSSNRQKILERTEILNQEWKQRRIQPV). O-linked (GlcNAc) serine glycosylation is present at S75. S76 is subject to Phosphoserine. Positions 180-222 (QYNDDDDDDDGDDPEEREEKQKDLEDHRDDKESRPPRKFPSDK) are disordered. Residues 182-195 (NDDDDDDDGDDPEE) show a composition bias toward acidic residues. The span at 196–222 (REEKQKDLEDHRDDKESRPPRKFPSDK) shows a compositional bias: basic and acidic residues. The interval 329-522 (EGAKEFAAAL…SSNHVYNYQP (194 aa)) is interaction with CDYL. Phosphothreonine is present on T339. The disordered stretch occupies residues 340-426 (AERIKTPPKR…PIKMKPNIEP (87 aa)). T345 carries the post-translational modification Phosphothreonine; by CDK1 and CDK2. Residues 345-357 (TPPKRPGGRRRGR) are compositionally biased toward basic residues. Phosphoserine occurs at positions 363 and 366. T367 carries the phosphothreonine modification. A compositionally biased stretch (basic and acidic residues) spans 374–385 (ESKDTDSDREAG). Phosphothreonine is present on T487. In terms of domain architecture, CXC spans 503–605 (CRKIQLKKDG…SKNVSCKNCS (103 aa)). The SET domain occupies 612–727 (KHLLLAPSDV…TGEELFFDYR (116 aa)). K634 is covalently cross-linked (Glycyl lysine isopeptide (Lys-Gly) (interchain with G-Cter in SUMO2)).

It belongs to the class V-like SAM-binding methyltransferase superfamily. Histone-lysine methyltransferase family. EZ subfamily. As to quaternary structure, component of the PRC2/EED-EZH2 complex, which includes EED, EZH2, SUZ12, RBBP4 and RBBP7 and possibly AEBP2. The minimum components required for methyltransferase activity of the PRC2/EED-EZH2 complex are EED, EZH2 and SUZ12. The PRC2 complex may also interact with DNMT1, DNMT3A, DNMT3B and PHF1 via the EZH2 subunit and with SIRT1 via the SUZ12 subunit. Interacts with HDAC1 and HDAC2. Binds ATRX via the SET domain. Interacts with PRAME. Interacts with CDYL. Interacts with BMAL1, CLOCK and CRY1. Interacts with DNMT3L; the interaction is direct. Interacts with EZHIP; the interaction blocks EZH2 methyltransferase activity. Interacts with ZNF263; recruited to the SIX3 promoter along with other proteins involved in chromatin modification and transcriptional corepression where it contributes to transcriptional repression. Interacts with ARMC12. Interacts with ZMYND8; the interaction is dependent on the presence of chromatin. Interacts with DDX18; this interaction inhibits the PRC2 complex. Post-translationally, phosphorylated by AKT1. Phosphorylation by AKT1 reduces methyltransferase activity. Phosphorylation at Thr-345 by CDK1 and CDK2 promotes maintenance of H3K27me3 levels at EZH2-target loci, thus leading to epigenetic gene silencing. In terms of processing, sumoylated. Glycosylated: O-GlcNAcylation at Ser-75 by OGT increases stability of EZH2 and facilitates the formation of H3K27me3 by the PRC2/EED-EZH2 complex.

Its subcellular location is the nucleus. The catalysed reaction is L-lysyl(27)-[histone H3] + 3 S-adenosyl-L-methionine = N(6),N(6),N(6)-trimethyl-L-lysyl(27)-[histone H3] + 3 S-adenosyl-L-homocysteine + 3 H(+). Functionally, polycomb group (PcG) protein. Catalytic subunit of the PRC2/EED-EZH2 complex, which methylates 'Lys-9' (H3K9me) and 'Lys-27' (H3K27me) of histone H3, leading to transcriptional repression of the affected target gene. Able to mono-, di- and trimethylate 'Lys-27' of histone H3 to form H3K27me1, H3K27me2 and H3K27me3, respectively. Displays a preference for substrates with less methylation, loses activity when progressively more methyl groups are incorporated into H3K27, H3K27me0 &gt; H3K27me1 &gt; H3K27me2. Compared to EZH1-containing complexes, it is more abundant in embryonic stem cells and plays a major role in forming H3K27me3, which is required for embryonic stem cell identity and proper differentiation. The PRC2/EED-EZH2 complex may also serve as a recruiting platform for DNA methyltransferases, thereby linking two epigenetic repression systems. EZH2 can also methylate non-histone proteins such as the transcription factor GATA4 and the nuclear receptor RORA. Regulates the circadian clock via histone methylation at the promoter of the circadian genes. Essential for the CRY1/2-mediated repression of the CLOCK-BMAL1 transcriptional activation of PER1/2. Involved in the di and trimethylation of 'Lys-27' of histone H3 on PER1/2 promoters which is necessary for the CRY1/2 proteins to inhibit transcription. This is Histone-lysine N-methyltransferase EZH2 (EZH2) from Macaca fascicularis (Crab-eating macaque).